We begin with the raw amino-acid sequence, 95 residues long: Acylphosphatase (95 aa).

Positions 8–95 (RAKILVRGKV…GNFRTFEIKK (88 aa)) constitute an Acylphosphatase-like domain. Residues arginine 23 and asparagine 41 contribute to the active site.

Belongs to the acylphosphatase family.

The catalysed reaction is an acyl phosphate + H2O = a carboxylate + phosphate + H(+). The polypeptide is Acylphosphatase (acyP) (Leptospira interrogans serogroup Icterohaemorrhagiae serovar copenhageni (strain Fiocruz L1-130)).